The primary structure comprises 421 residues: Histidine--tRNA ligase (421 aa).

It belongs to the class-II aminoacyl-tRNA synthetase family. As to quaternary structure, homodimer.

Its subcellular location is the cytoplasm. It carries out the reaction tRNA(His) + L-histidine + ATP = L-histidyl-tRNA(His) + AMP + diphosphate + H(+). This is Histidine--tRNA ligase from Francisella tularensis subsp. holarctica (strain FTNF002-00 / FTA).